The sequence spans 453 residues: MIEKSNNIYLSIDPIVERIKKNGEELPLINSEKKGIDYTQIVVYLVGLSDGLIHLASLAIYYLFKDHYRLTPYQVSLILMYPYLPFILKPIIALITDSISIFGMRRKPYLFLFSLFQSLNFLSLALVDLSLIQATLVLFFISLCASFCTTVAEALVVESSIGKTYSQGTNKVTEFIASKAVGSLSVAYFSGYFLEKVSREYIFMATSIFPLIISISCLFLKEKEYVTRKNIFKQMTDLIKFINTPVFIGPFLYIFVYMSGPDYDDAFFFFCTNKLGFRPSFMGTLRLTYGIASLIGIIVYRVFLKNSSLRNTLIFTTLVSFPIYISPIILTEKINKYFGISNELFVLSGGFLIEAITEIQLLPLFILTANICQEGLEASVFATILSVKNLGSLTKKGTSSLLTYLMKIDTYNFDNLSMYILTCGLFLLLSLSLVPLLPSEDQIESLKNKKIQK.

11 helical membrane-spanning segments follow: residues 41–64, 76–96, 108–126, 132–156, 176–195, 201–220, 241–260, 280–300, 312–330, 346–366, and 416–437; these read IVVYLVGLSDGLIHLASLAIYYLF, SLILMYPYLPFILKPIIALIT, PYLFLFSLFQSLNFLSLAL, IQATLVLFFISLCASFCTTVAEALV, IASKAVGSLSVAYFSGYFLE, YIFMATSIFPLIISISCLFL, FINTPVFIGPFLYIFVYMSG, SFMGTLRLTYGIASLIGIIVY, TLIFTTLVSFPIYISPIIL, VLSGGFLIEAITEIQLLPLFI, and LSMYILTCGLFLLLSLSLVPLL.

It belongs to the major facilitator superfamily. Folate-biopterin transporter (TC 2.A.71) family.

It is found in the plastid. It localises to the apicoplast. The protein localises to the membrane. In terms of biological role, putative folate transporter. Required for sporogony of malaria parasites and host switching. The sequence is that of Putative folate transporter 2 from Plasmodium berghei (strain Anka).